The primary structure comprises 315 residues: Putative serine/threonine-protein phosphatase PP2A-4 catalytic subunit (315 aa).

Residues Asp-63, His-65, Asp-91, and Asn-123 each coordinate Mn(2+). His-124 (proton donor) is an active-site residue. Mn(2+) is bound by residues His-173 and His-247.

The protein belongs to the PPP phosphatase family. PP-2A subfamily. Requires Mn(2+) as cofactor.

The protein resides in the cytoplasm. It catalyses the reaction O-phospho-L-seryl-[protein] + H2O = L-seryl-[protein] + phosphate. The catalysed reaction is O-phospho-L-threonyl-[protein] + H2O = L-threonyl-[protein] + phosphate. The protein is Putative serine/threonine-protein phosphatase PP2A-4 catalytic subunit (PP2A4) of Oryza sativa subsp. indica (Rice).